The sequence spans 326 residues: MKPSIVLYKSIPTDLHQRLAQHFTVNSFDGLTPDNQPELLAALQQAEGLIGSGGKIDQDFLQLAPNLRAASTISVGYDNFDVEALSQRGIALMHTPTVLTETVADTMMALMLSTARRVVELAERVKAGEWQESIGDDWFGVDVHHKTIGILGMGRIGMALAQRAHFGFSMPVLYTSRRPHEAAEQRFGARHCSLDTLLAEADFLCITLPMTEQTYHMIGREQLAKMKSSAILINAGRGPVVDEQALIAALQDGTIHAAGLDVFEQEPLPVDSPLLTLRNVVAVPHIGSATHETRYNMAACAVDNLINALTGTVKENCVNPQVLITH.

Residues Arg237 and Glu266 contribute to the active site. His285 functions as the Proton donor in the catalytic mechanism.

The protein belongs to the D-isomer specific 2-hydroxyacid dehydrogenase family. GhrB subfamily. As to quaternary structure, homodimer.

Its subcellular location is the cytoplasm. It catalyses the reaction glycolate + NADP(+) = glyoxylate + NADPH + H(+). The catalysed reaction is (R)-glycerate + NAD(+) = 3-hydroxypyruvate + NADH + H(+). The enzyme catalyses (R)-glycerate + NADP(+) = 3-hydroxypyruvate + NADPH + H(+). Functionally, catalyzes the NADPH-dependent reduction of glyoxylate and hydroxypyruvate into glycolate and glycerate, respectively. This Yersinia pseudotuberculosis serotype O:1b (strain IP 31758) protein is Glyoxylate/hydroxypyruvate reductase B.